The following is a 304-amino-acid chain: Probable WRKY transcription factor 29 (304 aa).

Disordered stretches follow at residues 76-96 and 185-236; these read LPED…GCLL and YTNE…IPSA. Over residues 78–88 the composition is skewed to basic and acidic residues; sequence EDSKPFRDDKK. Residues 128–194 constitute a DNA-binding region (WRKY); the sequence is KEENLLSDAW…YTNEHNHELP (67 aa). 2 stretches are compositionally biased toward polar residues: residues 196-213 and 225-236; these read RRNS…QPKP and SSPTSNPMIPSA.

It belongs to the WRKY group II-e family.

It is found in the nucleus. Transcription factor involved in the expression of defense genes in innate immune response of plants. Interacts specifically with the W box (5'-(T)TGAC[CT]-3'), a frequently occurring elicitor-responsive cis-acting element. Activates WRKY 22, SIRK and its own promoters. The sequence is that of Probable WRKY transcription factor 29 (WRKY29) from Arabidopsis thaliana (Mouse-ear cress).